The following is a 776-amino-acid chain: Ent-8-alpha-hydroxylabd-13-en-15-yl diphosphate synthase CPS4, chloroplastic (776 aa).

A chloroplast-targeting transit peptide spans 1–60; it reads MSFASNATGFRIPLTTCVYPSPILRFNAKVGSGSSYGTTEAQRNMKCVDGIGRSRVVAVA. K226 provides a ligand contact to substrate. D357 and D359 together coordinate Mg(2+). A DXDD motif motif is present at residues 357–360; sequence DSDD. Position 443 (K443) interacts with substrate.

It belongs to the terpene synthase family. Requires Mg(2+) as cofactor.

The protein resides in the plastid. The protein localises to the chloroplast. It carries out the reaction ent-8alpha-hydroxylabd-13-en-15-yl diphosphate = (2E,6E,10E)-geranylgeranyl diphosphate + H2O. It functions in the pathway secondary metabolite biosynthesis; terpenoid biosynthesis. Involved in diterpenoid biosynthesis. Catalyzes the conversion of all-trans-geranylgeranyl diphosphate to ent-8alpha-hydroxylabd-13-en-15-yl diphosphate. This chain is Ent-8-alpha-hydroxylabd-13-en-15-yl diphosphate synthase CPS4, chloroplastic, found in Salvia miltiorrhiza (Chinese sage).